Consider the following 515-residue polypeptide: Protein disulfide-isomerase (515 aa).

The signal sequence occupies residues Met-1 to Ala-20. 2 consecutive Thioredoxin domains span residues Ala-21–Pro-132 and Val-339–Lys-470. Catalysis depends on nucleophile residues Cys-54, Cys-57, Cys-389, and Cys-392. 2 cysteine pairs are disulfide-bonded: Cys-54–Cys-57 and Cys-389–Cys-392. Positions Val-478–Leu-515 are disordered. A compositionally biased stretch (low complexity) spans Thr-490–Ala-504. Over residues Asp-506–Leu-515 the composition is skewed to basic and acidic residues. Residues His-512 to Leu-515 carry the Prevents secretion from ER motif.

It belongs to the protein disulfide isomerase family.

It is found in the endoplasmic reticulum lumen. The catalysed reaction is Catalyzes the rearrangement of -S-S- bonds in proteins.. Its function is as follows. Participates in the folding of proteins containing disulfide bonds, may be involved in glycosylation, prolyl hydroxylation and triglyceride transfer. The sequence is that of Protein disulfide-isomerase (pdiA) from Aspergillus niger.